Here is a 622-residue protein sequence, read N- to C-terminus: Mitochondrial distribution and morphology protein 34 (622 aa).

The region spanning 1 to 204 (MSFKVNWNSL…LPTLIHQLSL (204 aa)) is the SMP-LTD domain. 3 disordered regions span residues 364-393 (YSNKDAPNKPKRRRIKVHKKSKAKQDDNTV), 442-468 (LETMSTGSSSSASSQVIAHPTPKRAYQ), and 572-592 (LDGGKNSANTNNSSGGKNFRP). Basic residues predominate over residues 372–385 (KPKRRRIKVHKKSK). Residues 446–455 (STGSSSSASS) show a composition bias toward low complexity. Residues 577–587 (NSANTNNSSGG) are compositionally biased toward polar residues.

The protein belongs to the MDM34 family. In terms of assembly, component of the ER-mitochondria encounter structure (ERMES) or MDM complex, composed of MMM1, MDM10, MDM12 and MDM34.

The protein localises to the mitochondrion outer membrane. In terms of biological role, component of the ERMES/MDM complex, which serves as a molecular tether to connect the endoplasmic reticulum (ER) and mitochondria. Components of this complex are involved in the control of mitochondrial shape and protein biogenesis, and function in nonvesicular lipid trafficking between the ER and mitochondria. MDM34 is required for the interaction of the ER-resident membrane protein MMM1 and the outer mitochondrial membrane-resident beta-barrel protein MDM10. This chain is Mitochondrial distribution and morphology protein 34, found in Candida albicans (strain WO-1) (Yeast).